Consider the following 65-residue polypeptide: DNA gyrase inhibitor YacG (65 aa).

Residues cysteine 9, cysteine 12, cysteine 28, and cysteine 32 each coordinate Zn(2+). The disordered stretch occupies residues 43-65; the sequence is EEKRIPSQSENSDSDDWSGQPEQ.

The protein belongs to the DNA gyrase inhibitor YacG family. As to quaternary structure, interacts with GyrB. Zn(2+) serves as cofactor.

Functionally, inhibits all the catalytic activities of DNA gyrase by preventing its interaction with DNA. Acts by binding directly to the C-terminal domain of GyrB, which probably disrupts DNA binding by the gyrase. In Photorhabdus laumondii subsp. laumondii (strain DSM 15139 / CIP 105565 / TT01) (Photorhabdus luminescens subsp. laumondii), this protein is DNA gyrase inhibitor YacG.